A 69-amino-acid chain; its full sequence is Large ribosomal subunit protein bL31 (69 aa).

Zn(2+) is bound by residues cysteine 16, cysteine 18, cysteine 36, and cysteine 39.

This sequence belongs to the bacterial ribosomal protein bL31 family. Type A subfamily. Part of the 50S ribosomal subunit. Requires Zn(2+) as cofactor.

Binds the 23S rRNA. The sequence is that of Large ribosomal subunit protein bL31 from Kosmotoga olearia (strain ATCC BAA-1733 / DSM 21960 / TBF 19.5.1).